The sequence spans 386 residues: O-methyltransferase 11 (386 aa).

Ser-207, Gly-231, Asp-254, Asp-274, and Lys-288 together coordinate S-adenosyl-L-homocysteine. Residue Asp-254 coordinates S-adenosyl-L-methionine. The Proton acceptor role is filled by His-292.

It belongs to the class I-like SAM-binding methyltransferase superfamily. Cation-independent O-methyltransferase family. In terms of assembly, homodimer.

It catalyses the reaction dopamine + S-adenosyl-L-methionine = 4-methoxytyramine + S-adenosyl-L-homocysteine + H(+). The enzyme catalyses 3,4-dihydroxy-5-methoxyphenethylamine + S-adenosyl-L-methionine = 3-hydroxy-4,5-dimethoxyphenethylamine + S-adenosyl-L-homocysteine + H(+). It carries out the reaction 3-hydroxy-4,5-dimethoxyphenethylamine + S-adenosyl-L-methionine = mescaline + S-adenosyl-L-homocysteine + H(+). The catalysed reaction is 4-hydroxy-3,5-dimethoxyphenethylamine + S-adenosyl-L-methionine = mescaline + S-adenosyl-L-homocysteine + H(+). The protein operates within aromatic compound metabolism. It functions in the pathway alkaloid biosynthesis. Its function is as follows. O-methyltransferase participating in the biosynthesis of natural products derived from phenylethylamine, including mescaline, a natural hallucinogen potentially used in psychotherapeutic treatments. Catalyzes the O-methylation of mescaline para hydroxyl groups, using dopamine, 3,4-dihydroxy-5-methoxyphenethylamine, 3-hydroxy-4,5-dimethoxyphenethylamine and 4-hydroxy-3,5-dimethoxyphenethylamine as substrates. The polypeptide is O-methyltransferase 11 (Lophophora williamsii (Peyote)).